The chain runs to 391 residues: 3-ketoacyl-CoA thiolase (391 aa).

Cys-95 serves as the catalytic Acyl-thioester intermediate. Active-site proton acceptor residues include His-347 and Cys-377.

This sequence belongs to the thiolase-like superfamily. Thiolase family. In terms of assembly, heterotetramer of two alpha chains (FadB) and two beta chains (FadA).

The protein localises to the cytoplasm. It catalyses the reaction an acyl-CoA + acetyl-CoA = a 3-oxoacyl-CoA + CoA. The protein operates within lipid metabolism; fatty acid beta-oxidation. Its function is as follows. Catalyzes the final step of fatty acid oxidation in which acetyl-CoA is released and the CoA ester of a fatty acid two carbons shorter is formed. This is 3-ketoacyl-CoA thiolase from Pseudomonas aeruginosa (strain ATCC 15692 / DSM 22644 / CIP 104116 / JCM 14847 / LMG 12228 / 1C / PRS 101 / PAO1).